A 526-amino-acid chain; its full sequence is GMP synthase [glutamine-hydrolyzing] (526 aa).

The 200-residue stretch at 9–208 (RILILDFGSQ…LVNICGCKQL (200 aa)) folds into the Glutamine amidotransferase type-1 domain. Residue cysteine 86 is the Nucleophile of the active site. Residues histidine 182 and glutamate 184 contribute to the active site. The GMPS ATP-PPase domain maps to 209-401 (WTPGRIIEDA…LGLPYDMVYR (193 aa)). 236–242 (SGGVDSS) contacts ATP.

Homodimer.

It catalyses the reaction XMP + L-glutamine + ATP + H2O = GMP + L-glutamate + AMP + diphosphate + 2 H(+). Its pathway is purine metabolism; GMP biosynthesis; GMP from XMP (L-Gln route): step 1/1. Its function is as follows. Catalyzes the synthesis of GMP from XMP. In Hahella chejuensis (strain KCTC 2396), this protein is GMP synthase [glutamine-hydrolyzing].